A 221-amino-acid polypeptide reads, in one-letter code: Octanoyltransferase (221 aa).

A BPL/LPL catalytic domain is found at K36 to A221. Residues R81–H88, A154–G156, and G167–A169 each bind substrate. C185 serves as the catalytic Acyl-thioester intermediate.

This sequence belongs to the LipB family.

The protein resides in the cytoplasm. It carries out the reaction octanoyl-[ACP] + L-lysyl-[protein] = N(6)-octanoyl-L-lysyl-[protein] + holo-[ACP] + H(+). The protein operates within protein modification; protein lipoylation via endogenous pathway; protein N(6)-(lipoyl)lysine from octanoyl-[acyl-carrier-protein]: step 1/2. In terms of biological role, catalyzes the transfer of endogenously produced octanoic acid from octanoyl-acyl-carrier-protein onto the lipoyl domains of lipoate-dependent enzymes. Lipoyl-ACP can also act as a substrate although octanoyl-ACP is likely to be the physiological substrate. The polypeptide is Octanoyltransferase (Parabacteroides distasonis (strain ATCC 8503 / DSM 20701 / CIP 104284 / JCM 5825 / NCTC 11152)).